The sequence spans 330 residues: DNA-directed RNA polymerase subunit alpha (330 aa).

Residues Met1–Ser225 form an alpha N-terminal domain (alpha-NTD) region. Positions Val237–Asp330 are alpha C-terminal domain (alpha-CTD).

It belongs to the RNA polymerase alpha chain family. In terms of assembly, homodimer. The RNAP catalytic core consists of 2 alpha, 1 beta, 1 beta' and 1 omega subunit. When a sigma factor is associated with the core the holoenzyme is formed, which can initiate transcription.

The enzyme catalyses RNA(n) + a ribonucleoside 5'-triphosphate = RNA(n+1) + diphosphate. Its function is as follows. DNA-dependent RNA polymerase catalyzes the transcription of DNA into RNA using the four ribonucleoside triphosphates as substrates. This Dehalococcoides mccartyi (strain CBDB1) protein is DNA-directed RNA polymerase subunit alpha.